Here is a 661-residue protein sequence, read N- to C-terminus: Potassium voltage-gated channel subfamily KQT member 1 (661 aa).

2 disordered regions span residues 1 to 29 (MAAA…ESAG) and 42 to 88 (ESGP…SLDP). At 1–119 (MAAASTPPRA…YNFLERPTGW (119 aa)) the chain is on the cytoplasmic side. Residue Ser-27 is modified to Phosphoserine; by PKA. Pro residues predominate over residues 54 to 85 (VSPPSAPEPAPPASPASPAPPAADQGPQPPVS). A helical membrane pass occupies residues 120-141 (KCFAYHFTVFLIVLVCLIFSVL). At 142-152 (STIEQYATLAT) the chain is on the extracellular side. A helical transmembrane segment spans residues 153 to 175 (GTLFWMEIVLVVFFGTEYVVRLW). Over 176–191 (SAGCRSKYVGLWGRLR) the chain is Cytoplasmic. A helical transmembrane segment spans residues 192 to 217 (FARKPISIIDLIVVVASMVVLCVGSK). The Extracellular segment spans residues 218–225 (GQVFATSA). The chain crosses the membrane as a helical; Voltage-sensor span at residues 226-241 (IRGIRFLQILRMLHVD). The interaction with KCNE3 stretch occupies residues 237-245 (MLHVDRQGG). Residues 242–259 (RQGGTWRLLGSVVFIHRQ) are Cytoplasmic-facing. Gln-243 provides a ligand contact to a 1,2-diacyl-sn-glycero-3-phospho-(1D-myo-inositol-4,5-bisphosphate). Residues 260–282 (ELITTLYIGFLGLIFSSYFVYLA) traverse the membrane as a helical segment. At 283-298 (EKDAVNESGRVEFGSY) the chain is on the extracellular side. N-linked (GlcNAc...) asparagine glycosylation occurs at Asn-288. Positions 299 to 319 (ADALWWGVVTVTTIGYGDKVP) form an intramembrane region, pore-forming. Topologically, residues 320–321 (QT) are extracellular. The helical transmembrane segment at 322–347 (WVGKTIASCFSVFAISFFALPAGILG) threads the bilayer. Topologically, residues 348-661 (SGFALKVQQK…VPRRDPEEGS (314 aa)) are cytoplasmic. The interaction with CALM stretch occupies residues 369–381 (AAASLIQTAWRCY). 2 positions are modified to phosphoserine: Ser-406 and Ser-408. The interval 514–528 (KVIRRMQYFVAKKKF) is interaction with CALM; calcium-dependent. Residues 534–571 (PYDVRDVIEQYSQGHLNLMVRIKELQRRLDQSIGKPSL) are interaction with KCNE1 C-terminus. The stretch at 584-620 (SNSIGARLNRVEDKVTQLDQRLVLIADMLQQLLALHQ) forms a coiled coil. The interaction with AKAP9 stretch occupies residues 587-615 (IGARLNRVEDKVTQLDQRLVLIADMLQQL). The interval 588 to 619 (GARLNRVEDKVTQLDQRLVLIADMLQQLLALH) is C-terminal assembly domain (tetramerization). The tract at residues 624-661 (HGGAHPAQARDGDPADPELFLPTYEQLTVPRRDPEEGS) is disordered.

This sequence belongs to the potassium channel family. KQT (TC 1.A.1.15) subfamily. Kv7.1/KCNQ1 sub-subfamily. Tetramer. Heterotetramer with KCNE1; targets to the membrane raft. Interacts (via C-terminus) with CALM; forms a heterooctameric structure (with 4:4 KCNQ1:CALM stoichiometry) in a calcium-independent manner. Interacts with AKAP9; targets protein kinase A (PKA) catalytic and regulatory subunits and protein phosphatase 1 (PP1) to the KCNQ1-KCNE1 complex, allowing PKA-mediated phosphorylation and increase of delayed rectifier potassium channel activity. Interacts with KCNE2; form a heterooligomer complex that targets to the membrane raft and leading to currents with an apparently instantaneous activation, a rapid deactivation process and a linear current-voltage relationship and decreases the amplitude of the outward current. Interacts with AP2M1; mediates estrogen-induced internalization via clathrin-coated vesicles. Interacts with NEDD4L; promotes internalization and decreases I(Ks) currents. Interacts with USP2; counteracts the NEDD4L-specific down-regulation of I(Ks) and restore plasma membrane localization. Heterotetramer with KCNQ5; has a voltage-gated potassium channel activity. Interacts with KCNE3; four KCNE3 molecules are bound to one KCNQ1 tetramer (4:4 KCNQ1:KCNE3 stoichiometry); alters membrane raft localization; affects KCNQ1 structure and gating properties. Interacts with KCNE4; impairs KCNQ1 localization in lipid rafts and inhibits voltage-gated potassium channel activity. Interacts with KCNE5; impairs KCNQ1 localization in lipid rafts and only conducts current upon strong and continued depolarization. Interacts with SLC5A3; forms coregulatory channel-transporter complexes that modulate Na(+)-coupled myo-inositol influx through the transporter. Phosphorylation at Ser-27 by PKA; increases delayed rectifier potassium channel activity of the KCNQ1-KCNE1 complex through a macromolecular complex that includes PKA, PP1, and the targeting protein AKAP9. Post-translationally, ubiquitinated by NEDD4L; promotes internalization. The ubiquitinylated form is internalized through a clathrin-mediated endocytosis by interacting with AP2M1 and is recycled back to the cell membrane via RAB4A and RAB11A. In terms of processing, deubiquitinated by USP2; counteracts the NEDD4L-specific down-regulation of I(Ks) and restores the membrane localization.

The protein localises to the cell membrane. The protein resides in the cytoplasmic vesicle membrane. It localises to the early endosome. It is found in the membrane raft. Its subcellular location is the endoplasmic reticulum. The protein localises to the basolateral cell membrane. The protein resides in the apical cell membrane. The enzyme catalyses K(+)(in) = K(+)(out). Its activity is regulated as follows. PIP2 molecule is essential to activate KCNQ channels by inducing the coupling of the voltage-sensing domain (VSD) and the pore-forming domain (PD). Upon channel activation, PIP2 disrupts the VSD-calmodulin/CALM interactions, causing the release of CALM from the VSD which triggers the opening of the gate. Calcium potentiates KCNQ1 channel current through calcium-bound CALM. Calcium-bound CALM competes with PIP2 to stabilize the channel open state. In terms of biological role, pore-forming subunit of the voltage-gated potassium (Kv) channel involved in the regulation of cardiomyocyte excitability and important in normal development and functions of myocardium, inner ear, stomach and colon. Associates with KCNE beta subunits that modulates current kinetics. Induces a voltage-dependent by rapidly activating and slowly deactivating potassium-selective outward current. Also promotes a delayed voltage activated potassium current showing outward rectification characteristic. During beta-adrenergic receptor stimulation participates in cardiac repolarization by associating with KCNE1 to form the I(Ks) cardiac potassium current that increases the amplitude and slows down the activation kinetics of outward potassium current I(Ks). Muscarinic agonist oxotremorine-M strongly suppresses KCNQ1/KCNE1 current. When associated with KCNE3, forms the potassium channel that is important for cyclic AMP-stimulated intestinal secretion of chloride ions. This interaction with KCNE3 is reduced by 17beta-estradiol, resulting in the reduction of currents. During conditions of increased substrate load, maintains the driving force for proximal tubular and intestinal sodium ions absorption, gastric acid secretion, and cAMP-induced jejunal chloride ions secretion. Allows the provision of potassium ions to the luminal membrane of the secretory canaliculus in the resting state as well as during stimulated acid secretion. When associated with KCNE2, forms a heterooligomer complex leading to currents with an apparently instantaneous activation, a rapid deactivation process and a linear current-voltage relationship and decreases the amplitude of the outward current. When associated with KCNE4, inhibits voltage-gated potassium channel activity. When associated with KCNE5, this complex only conducts current upon strong and continued depolarization. Also forms a heterotetramer with KCNQ5 that has a voltage-gated potassium channel activity. Binds with phosphatidylinositol 4,5-bisphosphate. KCNQ1-KCNE2 channel associates with Na(+)-coupled myo-inositol symporter in the apical membrane of choroid plexus epithelium and regulates the myo-inositol gradient between blood and cerebrospinal fluid with an impact on neuron excitability. This is Potassium voltage-gated channel subfamily KQT member 1 from Oryctolagus cuniculus (Rabbit).